The sequence spans 149 residues: D-aminoacyl-tRNA deacylase (149 aa).

The Gly-cisPro motif, important for rejection of L-amino acids motif lies at 137–138 (GP).

Belongs to the DTD family. As to quaternary structure, homodimer.

It is found in the cytoplasm. The catalysed reaction is glycyl-tRNA(Ala) + H2O = tRNA(Ala) + glycine + H(+). The enzyme catalyses a D-aminoacyl-tRNA + H2O = a tRNA + a D-alpha-amino acid + H(+). Its function is as follows. An aminoacyl-tRNA editing enzyme that deacylates mischarged D-aminoacyl-tRNAs. Also deacylates mischarged glycyl-tRNA(Ala), protecting cells against glycine mischarging by AlaRS. Acts via tRNA-based rather than protein-based catalysis; rejects L-amino acids rather than detecting D-amino acids in the active site. By recycling D-aminoacyl-tRNA to D-amino acids and free tRNA molecules, this enzyme counteracts the toxicity associated with the formation of D-aminoacyl-tRNA entities in vivo and helps enforce protein L-homochirality. The protein is D-aminoacyl-tRNA deacylase of Thioalkalivibrio sulfidiphilus (strain HL-EbGR7).